A 66-amino-acid chain; its full sequence is Large ribosomal subunit protein bL31 (66 aa).

Zn(2+)-binding residues include C16, C18, C36, and C39.

It belongs to the bacterial ribosomal protein bL31 family. Type A subfamily. In terms of assembly, part of the 50S ribosomal subunit. It depends on Zn(2+) as a cofactor.

In terms of biological role, binds the 23S rRNA. The sequence is that of Large ribosomal subunit protein bL31 from Anoxybacillus flavithermus (strain DSM 21510 / WK1).